Here is a 4490-residue protein sequence, read N- to C-terminus: Dynein axonemal heavy chain 8 (4490 aa).

Residue serine 674 is modified to Phosphoserine. 4 AAA regions span residues 1808–2030 (YQNE…VLRT), 2090–2309 (NAVA…KLNL), 2416–2669 (YYPT…IWQG), and 2780–3034 (QFNE…YRRR). Residues 1846–1853 (GPAGTGKT) and 2128–2135 (GPSGSGKT) contribute to the ATP site. The stalk stretch occupies residues 3049–3346 (YKNIYAEKVK…MDLLNDADTC (298 aa)). Coiled-coil stretches lie at residues 3072-3164 (DKLM…ALNT), 3290-3354 (LKAN…QAAS), and 3594-3630 (RRVILTEKQELEAERVKLLEDVTFNKRKMKELEDNLL). 2 AAA regions span residues 3432–3662 (LVDP…EVSE) and 3877–4091 (ARKY…FIQN).

The protein belongs to the dynein heavy chain family. Consists of at least two heavy chains and a number of intermediate and light chains. In terms of tissue distribution, expressed in spermatozoa (at protein level). Not detected in airway epithelial cells (at protein level).

It is found in the cytoplasm. It localises to the cytoskeleton. Its subcellular location is the flagellum axoneme. Its function is as follows. Force generating protein component of the outer dynein arms (ODAs) in the sperm flagellum. Produces force towards the minus ends of microtubules. Dynein has ATPase activity; the force-producing power stroke is thought to occur on release of ADP. Involved in sperm motility; implicated in sperm flagellar assembly. This chain is Dynein axonemal heavy chain 8, found in Homo sapiens (Human).